The sequence spans 718 residues: Telomeric repeat-binding factor 2 (718 aa).

Disordered regions lie at residues 1–22 (MAAK…RSDD) and 219–286 (NSER…GAPE). Composition is skewed to basic and acidic residues over residues 8–22 (AAME…RSDD) and 219–228 (NSERAEEPKR). The interval 24–220 (EQAVNRWVLQ…LVTMMKSLNS (197 aa)) is TRFH dimerization. Repeat copies occupy residues 257-269 (GTLR…GGVA), 270-282 (GAPS…KDPT), 283-295 (GAPE…KDAV), 296-308 (RAPC…EDSQ), 309-321 (GTPR…RDVM), 322-334 (GAPS…KDLL), 335-347 (GAPK…RDVV), 348-360 (RAPS…KDPV), 361-373 (GTPG…RDVA), 374-386 (RAPS…KNLP), 387-399 (GAPE…KNTV), 400-412 (RAPS…KDLV), 413-425 (RAPK…RDVV), 426-438 (RAPS…KDTA), and 439-451 (GASE…SYPT). The segment at 257 to 451 (GTLRRAETAG…EPMKSASYPT (195 aa)) is 15 X 13 AA approximate tandem repeats. 2 disordered regions span residues 342-455 (TARD…ASQP) and 524-641 (FNKL…WSDE). Over residues 405–425 (AERRKDLVRAPKRAETARDVV) the composition is skewed to basic and acidic residues. A compositionally biased stretch (polar residues) spans 533–543 (PSPQQMSPSVS). The Nuclear localization signal signature appears at 545–550 (RTKRRK). The span at 584 to 595 (SQCSKSSESPDS) shows a compositional bias: low complexity. The span at 615 to 630 (PVSTKRSSQQRWNSSY) shows a compositional bias: polar residues. One can recognise an HTH myb-type domain in the interval 664 to 717 (KKQKWTVQESEWIKDGVRKYGEGRWKTISEKYPFQNRTSVQIKDRYRTMKKLGI). The segment at residues 688–713 (WKTISEKYPFQNRTSVQIKDRYRTMK) is a DNA-binding region (H-T-H motif).

Homodimer. Component of the shelterin complex (telosome). Interacts with TERF2IP/RAP1. In terms of tissue distribution, highly expressed in embryo.

The protein resides in the nucleus. The protein localises to the chromosome. It localises to the telomere. Its function is as follows. Binds the telomeric double-stranded 5'-TTAGGG-3' repeat and plays a central role in telomere maintenance and protection against end-to-end fusion of chromosomes. In addition to its telomeric DNA-binding role, required to recruit a number of factors and enzymes required for telomere protection, including the shelterin complex, TERF2IP/RAP1 and DCLRE1B/Apollo. Component of the shelterin complex (telosome) that is involved in the regulation of telomere length and protection. Shelterin associates with arrays of double-stranded 5'-TTAGGG-3' repeats added by telomerase and protects chromosome ends; without its protective activity, telomeres are no longer hidden from the DNA damage surveillance and chromosome ends are inappropriately processed by DNA repair pathways. Together with DCLRE1B/Apollo, plays a key role in telomeric loop (T loop) formation by generating 3' single-stranded overhang at the leading end telomeres: T loops have been proposed to protect chromosome ends from degradation and repair. Required both to recruit DCLRE1B/Apollo to telomeres and activate the exonuclease activity of DCLRE1B/Apollo. Together with DCLRE1B/Apollo, required to control the amount of DNA topoisomerase (TOP1, TOP2A and TOP2B) needed for telomere replication during fork passage and prevent aberrant telomere topology. Recruits TERF2IP/RAP1 to telomeres, thereby participating in to repressing homology-directed repair (HDR), which can affect telomere length. The sequence is that of Telomeric repeat-binding factor 2 (TERF2) from Gallus gallus (Chicken).